The primary structure comprises 357 residues: Glucose-6-phosphatase catalytic subunit 1 (357 aa).

Residues 1-28 (MEERMNVLHDFGIQSTRYLQVNYEDSQD) are Lumenal-facing. Residues 29–49 (WFVLVSVIADLRNAFYVLFPI) form a helical membrane-spanning segment. The Cytoplasmic segment spans residues 50–60 (WFHIQETVGIN). A helical transmembrane segment spans residues 61–81 (LLWVAVVGDWFNLVFKWILFG). The Lumenal segment spans residues 82-117 (QRPYWWVLDTDYYSNSSVPLIKQFPVTCETGPGSPS). A substrate-binding site is contributed by arginine 83. Residue asparagine 96 is glycosylated (N-linked (GlcNAc...) asparagine). The helical transmembrane segment at 118–138 (GHAMGTAGVYYVMVTSTLAIF) threads the bilayer. The active-site Proton donor is the histidine 119. Residues 139–147 (RGKKKSTYG) lie on the Cytoplasmic side of the membrane. The chain crosses the membrane as a helical span at residues 148–168 (FRCLNVVLWLGYWAVQLNVCL). The Lumenal segment spans residues 169 to 170 (SR). Arginine 170 serves as a coordination point for substrate. A helical membrane pass occupies residues 171 to 191 (IYLAAHFPHQVVAGVLSGIAV). Histidine 176 functions as the Nucleophile in the catalytic mechanism. Topologically, residues 192–211 (AETFSHIRGIYNASLQRYCL) are cytoplasmic. A helical membrane pass occupies residues 212-232 (ITFFLFGFALGFYLLLKGLGV). The Lumenal segment spans residues 233 to 254 (DLLWTLEKAKRWCERPEWVHLD). Residues 255–275 (TTPFASLFKNLGTLLGLGLAL) traverse the membrane as a helical segment. The Cytoplasmic portion of the chain corresponds to 276 to 291 (NSSMYRKSCKGELRKS). The chain crosses the membrane as a helical span at residues 292–312 (LPFRLACIVASLGLLHLFDSL). The Lumenal portion of the chain corresponds to 313–320 (KPPSQIES). A helical transmembrane segment spans residues 321–341 (IFYILSFCKSATVPFASVSLI). Residues 342–357 (PYCLARLLGQTHKKSL) are Cytoplasmic-facing. Positions 354 to 357 (KKSL) match the Prevents secretion from ER motif.

This sequence belongs to the glucose-6-phosphatase family.

It localises to the endoplasmic reticulum membrane. It carries out the reaction D-glucose 6-phosphate + H2O = D-glucose + phosphate. It participates in carbohydrate biosynthesis; gluconeogenesis. Hydrolyzes glucose-6-phosphate to glucose in the endoplasmic reticulum. Forms with the glucose-6-phosphate transporter (SLC37A4/G6PT) the complex responsible for glucose production in the terminal step of glycogenolysis and gluconeogenesis. Hence, it is the key enzyme in homeostatic regulation of blood glucose levels. The chain is Glucose-6-phosphatase catalytic subunit 1 (G6pc1) from Rattus norvegicus (Rat).